The chain runs to 77 residues: Small ribosomal subunit protein uS17 (77 aa).

It belongs to the universal ribosomal protein uS17 family. In terms of assembly, part of the 30S ribosomal subunit.

Its function is as follows. One of the primary rRNA binding proteins, it binds specifically to the 5'-end of 16S ribosomal RNA. This Rickettsia prowazekii (strain Madrid E) protein is Small ribosomal subunit protein uS17.